Consider the following 390-residue polypeptide: Centrosomal protein of 44 kDa (390 aa).

Residues 11-195 (RNLEQVLRLL…ISEDTLSPIT (185 aa)) are binds with microtubules and centrioles. Residues 233-269 (EITALQTMLAECQENLKKLTSIEKRLDCLEQKMKGKV) are a coiled coil. Positions 322–348 (RKSEVERPASIPLSSGYSTASSDSTPR) are disordered. Residues Ser331 and Ser345 each carry the phosphoserine modification. Over residues 335-345 (SSGYSTASSDS) the composition is skewed to low complexity. The residue at position 346 (Thr346) is a Phosphothreonine. Residues 361–385 (SEETTIQKMERMKKMFEETAELLKC) are a coiled coil.

As to quaternary structure, interacts with CROCC. Interacts with POC1B; the interaction is direct and recruits POC1B to centriolar microtubules. Binds to centriolar microtubules.

It is found in the cytoplasm. The protein localises to the cytoskeleton. It localises to the microtubule organizing center. Its subcellular location is the centrosome. The protein resides in the centriole. It is found in the spindle pole. The protein localises to the midbody. Functionally, centriole-enriched microtubule-binding protein involved in centriole biogenesis. In collaboration with CEP295 and POC1B, is required for the centriole-to-centrosome conversion by ensuring the formation of bona fide centriole wall. Functions as a linker component that maintains centrosome cohesion. Associates with CROCC and regulates its stability and localization to the centrosome. The protein is Centrosomal protein of 44 kDa (CEP44) of Homo sapiens (Human).